The primary structure comprises 389 residues: 26S proteasome non-ATPase regulatory subunit 6 (389 aa).

The region spanning D193–S361 is the PCI domain.

It belongs to the proteasome subunit S10 family. As to quaternary structure, component of the 19S proteasome regulatory particle complex. The 26S proteasome consists of a 20S core particle (CP) and two 19S regulatory subunits (RP). The regulatory particle is made of a lid composed of 9 subunits including PSMD6, a base containing 6 ATPases and few additional components.

Its function is as follows. Component of the 26S proteasome, a multiprotein complex involved in the ATP-dependent degradation of ubiquitinated proteins. This complex plays a key role in the maintenance of protein homeostasis by removing misfolded or damaged proteins, which could impair cellular functions, and by removing proteins whose functions are no longer required. Therefore, the proteasome participates in numerous cellular processes, including cell cycle progression, apoptosis, or DNA damage repair. The polypeptide is 26S proteasome non-ATPase regulatory subunit 6 (PSMD6) (Bos taurus (Bovine)).